The chain runs to 97 residues: Co-chaperonin GroES (97 aa).

This sequence belongs to the GroES chaperonin family. As to quaternary structure, heptamer of 7 subunits arranged in a ring. Interacts with the chaperonin GroEL.

The protein resides in the cytoplasm. Its function is as follows. Together with the chaperonin GroEL, plays an essential role in assisting protein folding. The GroEL-GroES system forms a nano-cage that allows encapsulation of the non-native substrate proteins and provides a physical environment optimized to promote and accelerate protein folding. GroES binds to the apical surface of the GroEL ring, thereby capping the opening of the GroEL channel. The polypeptide is Co-chaperonin GroES (Pectobacterium atrosepticum (strain SCRI 1043 / ATCC BAA-672) (Erwinia carotovora subsp. atroseptica)).